The sequence spans 441 residues: Probable D-serine dehydratase (441 aa).

N6-(pyridoxal phosphate)lysine is present on K115.

It belongs to the serine/threonine dehydratase family. DsdA subfamily. It depends on pyridoxal 5'-phosphate as a cofactor.

The catalysed reaction is D-serine = pyruvate + NH4(+). This chain is Probable D-serine dehydratase, found in Fusobacterium nucleatum subsp. nucleatum (strain ATCC 25586 / DSM 15643 / BCRC 10681 / CIP 101130 / JCM 8532 / KCTC 2640 / LMG 13131 / VPI 4355).